We begin with the raw amino-acid sequence, 347 residues long: Protein-glutamate methylesterase/protein-glutamine glutaminase (347 aa).

The 117-residue stretch at Glu-3 to Glu-119 folds into the Response regulatory domain. A 4-aspartylphosphate modification is found at Asp-53. Residues Pro-132 to Ala-154 are disordered. One can recognise a CheB-type methylesterase domain in the interval Glu-152–Thr-346. Active-site residues include Ser-164, His-191, and Asp-288.

It belongs to the CheB family. Post-translationally, phosphorylated by CheA. Phosphorylation of the N-terminal regulatory domain activates the methylesterase activity.

The protein resides in the cytoplasm. It carries out the reaction [protein]-L-glutamate 5-O-methyl ester + H2O = L-glutamyl-[protein] + methanol + H(+). It catalyses the reaction L-glutaminyl-[protein] + H2O = L-glutamyl-[protein] + NH4(+). In terms of biological role, involved in the modulation of the chemotaxis system; catalyzes the demethylation of specific methylglutamate residues introduced into the Htr transducer proteins (methyl-accepting chemotaxis proteins) by CheR. Also required for Htr deamidations, at least at a specific glutamine-glutamate pair in HTR-II and a specific aspartate-glutamine pair in Htr4. The sequence is that of Protein-glutamate methylesterase/protein-glutamine glutaminase from Halobacterium salinarum (strain ATCC 29341 / DSM 671 / R1).